A 294-amino-acid chain; its full sequence is 2-dehydropantoate 2-reductase (294 aa).

Residues Gly10–Gly15, Arg34, Lys74, Asn98, and Ala122 contribute to the NADP(+) site. Catalysis depends on Lys178, which acts as the Proton donor. Substrate is bound by residues Lys178, Asn182, Asn186, Asn196, and Asn243 to Ser246. Glu258 contributes to the NADP(+) binding site.

It belongs to the ketopantoate reductase family.

Its subcellular location is the cytoplasm. It carries out the reaction (R)-pantoate + NAD(+) = 2-dehydropantoate + NADH + H(+). The enzyme catalyses (R)-pantoate + NADP(+) = 2-dehydropantoate + NADPH + H(+). It participates in cofactor biosynthesis; coenzyme A biosynthesis. Catalyzes the NAD(P)H-dependent reduction of ketopantoate into pantoic acid. The protein is 2-dehydropantoate 2-reductase of Archaeoglobus fulgidus (strain ATCC 49558 / DSM 4304 / JCM 9628 / NBRC 100126 / VC-16).